Reading from the N-terminus, the 304-residue chain is MQLKDLINKKKNLNNINLKVSNERNIFLINIMKLNQRLTFFSKNAFEIKESILSLKRIYNIKHDMLRHEERKIFKFLNKINDRVLWIYLTEEQKYSTDSYSRYEQKILKTIKSNRDDFILIGQGAIEFGKNHNLNVLQTFNDSNIKNLTTQLTKMIMILYTFDNYKKVNFVINSNKNYDGHFTILPMNEFSFDKFINLQKCDSNIIDFQKVKIYPNLNEFINVQINVFLVNIINTLITESSFYKTKNGLVATNNILKELDDNLSKIQRKITRVKTELQIEEINLLARQNMNEDDNDNDGGVYES.

This is an uncharacterized protein from Ureaplasma parvum serovar 3 (strain ATCC 700970).